A 392-amino-acid polypeptide reads, in one-letter code: Basic salivary proline-rich protein 1 (392 aa).

A signal peptide spans 1 to 16 (MLLILLSVALLALSSA). Residue Gln-17 is modified to Pyrrolidone carboxylic acid. The span at 19 to 28 (LNEDVSQEES) shows a compositional bias: polar residues. Positions 19–392 (LNEDVSQEES…QGGRPSRPPQ (374 aa)) are disordered. Positions 34–47 (GNPQGPSPQGGNKP) are enriched in low complexity. The residue at position 40 (Ser-40) is a Phosphoserine; alternate. An O-linked (Hex) serine; alternate glycan is attached at Ser-40. Residues 48–83 (QGPPPPPGKPQGPPPQGGNKPQGPPPPGKPQGPPPQ) show a composition bias toward pro residues. 15 tandem repeats follow at residues 53–72 (PPGK…QGPP), 73–92 (PPGK…SPRS), 93–112 (PPGK…QGPP), 114–133 (PPGK…QGPP), 134–153 (PPGK…SPRS), 154–173 (PPGK…QGPP), 175–194 (PPGK…QGPP), 195–214 (PPGK…SPRS), 215–234 (PPGK…QGPP), 236–255 (PPGK…QGPP), 256–275 (PPGK…SPQS), 276–295 (PPGK…QGPP), 297–316 (PPGK…QGPP), 317–336 (PPGK…QSAR), and 338–357 (PPGK…QGPP). The 15 X 20 AA approximate tandem repeats of P-P-G-K-P-Q-G-P-P-[PAQ]-Q-[GE]-[GD]-[NKS]-[KSQRN]-[PRQS]-[QS] [GPS]-[PQAR]-[PSR] stretch occupies residues 53 to 357 (PPGKPQGPPP…QEGNNPQGPP (305 aa)). O-linked (HexNAc...) serine glycosylation occurs at Ser-87. Residues 91-144 (RSPPGKPQGPPPQGGNQPQGPPPPPGKPQGPPPQGGNKPQGPPPPGKPQGPPPQ) are compositionally biased toward pro residues. Ser-92 carries the post-translational modification Phosphoserine. Position 150 is a phosphoserine; alternate (Ser-150). An O-linked (Hex) serine; alternate glycan is attached at Ser-150. 4 stretches are compositionally biased toward pro residues: residues 152–205 (RSPP…PPPQ), 213–243 (RSPP…PQGP), 252–266 (QGPP…PPPQ), and 274–324 (QSPP…PQGP). Over residues 325–334 (PAQGGSKSQS) the composition is skewed to low complexity. Ser-330 carries O-linked (HexNAc...) serine glycosylation. Over residues 354–392 (QGPPPPAGGNPQQPQAPPAGQPQGPPRPPQGGRPSRPPQ) the composition is skewed to pro residues.

Post-translationally, O-glycosylated. O-glycosylation on Ser-87 is prevalent in head and neck cancer patients. O-Glycosylation on Ser-330 has a 5 times prevalence in head and neck cancers. Proteolytically cleaved at the tripeptide Xaa-Pro-Gln, where Xaa in the P(3) position is mostly lysine. The endoprotease may be of microbial origin. In terms of processing, pyroglutamate formation occurs on terminal Gln residues of cleaved peptides. Besides on the N-terminal of mature PBR1, pyroglutamate formation found on at least Gln-58.

It is found in the secreted. This chain is Basic salivary proline-rich protein 1 (PRB1), found in Homo sapiens (Human).